The following is a 392-amino-acid chain: Chorismate synthase (392 aa).

NADP(+)-binding residues include Arg40 and Arg46. FMN-binding positions include 135-137, 256-257, Gly300, 315-319, and Arg341; these read RAS, QA, and KPISS.

It belongs to the chorismate synthase family. In terms of assembly, homotetramer. The cofactor is FMNH2.

It carries out the reaction 5-O-(1-carboxyvinyl)-3-phosphoshikimate = chorismate + phosphate. It functions in the pathway metabolic intermediate biosynthesis; chorismate biosynthesis; chorismate from D-erythrose 4-phosphate and phosphoenolpyruvate: step 7/7. Catalyzes the anti-1,4-elimination of the C-3 phosphate and the C-6 proR hydrogen from 5-enolpyruvylshikimate-3-phosphate (EPSP) to yield chorismate, which is the branch point compound that serves as the starting substrate for the three terminal pathways of aromatic amino acid biosynthesis. This reaction introduces a second double bond into the aromatic ring system. This is Chorismate synthase from Salinispora tropica (strain ATCC BAA-916 / DSM 44818 / JCM 13857 / NBRC 105044 / CNB-440).